The sequence spans 97 residues: Co-chaperonin GroES (97 aa).

This sequence belongs to the GroES chaperonin family. In terms of assembly, heptamer of 7 subunits arranged in a ring. Interacts with the chaperonin GroEL.

The protein localises to the cytoplasm. Functionally, together with the chaperonin GroEL, plays an essential role in assisting protein folding. The GroEL-GroES system forms a nano-cage that allows encapsulation of the non-native substrate proteins and provides a physical environment optimized to promote and accelerate protein folding. GroES binds to the apical surface of the GroEL ring, thereby capping the opening of the GroEL channel. The chain is Co-chaperonin GroES from Aeromonas hydrophila subsp. hydrophila (strain ATCC 7966 / DSM 30187 / BCRC 13018 / CCUG 14551 / JCM 1027 / KCTC 2358 / NCIMB 9240 / NCTC 8049).